Here is a 122-residue protein sequence, read N- to C-terminus: Large ribosomal subunit protein uL14 (122 aa).

This sequence belongs to the universal ribosomal protein uL14 family. Part of the 50S ribosomal subunit. Forms a cluster with proteins L3 and L19. In the 70S ribosome, L14 and L19 interact and together make contacts with the 16S rRNA in bridges B5 and B8.

Binds to 23S rRNA. Forms part of two intersubunit bridges in the 70S ribosome. This is Large ribosomal subunit protein uL14 from Lactobacillus delbrueckii subsp. bulgaricus (strain ATCC BAA-365 / Lb-18).